Here is a 257-residue protein sequence, read N- to C-terminus: Thiazole synthase (257 aa).

The Schiff-base intermediate with DXP role is filled by K95. 1-deoxy-D-xylulose 5-phosphate-binding positions include G156, 182–183 (AG), and 204–205 (NT).

Belongs to the ThiG family. As to quaternary structure, homotetramer. Forms heterodimers with either ThiH or ThiS.

Its subcellular location is the cytoplasm. It catalyses the reaction [ThiS sulfur-carrier protein]-C-terminal-Gly-aminoethanethioate + 2-iminoacetate + 1-deoxy-D-xylulose 5-phosphate = [ThiS sulfur-carrier protein]-C-terminal Gly-Gly + 2-[(2R,5Z)-2-carboxy-4-methylthiazol-5(2H)-ylidene]ethyl phosphate + 2 H2O + H(+). It participates in cofactor biosynthesis; thiamine diphosphate biosynthesis. In terms of biological role, catalyzes the rearrangement of 1-deoxy-D-xylulose 5-phosphate (DXP) to produce the thiazole phosphate moiety of thiamine. Sulfur is provided by the thiocarboxylate moiety of the carrier protein ThiS. In vitro, sulfur can be provided by H(2)S. This chain is Thiazole synthase, found in Fusobacterium nucleatum subsp. nucleatum (strain ATCC 25586 / DSM 15643 / BCRC 10681 / CIP 101130 / JCM 8532 / KCTC 2640 / LMG 13131 / VPI 4355).